Consider the following 637-residue polypeptide: MPNVKLPDGNVKHFEAPLTIYDVAHHISPGLAKAAIAGRVDGVLVDTSYLIKEDCSLIIVTEKHEDSLEIIRHSTAHLLAQAVKALFPSAQVTIGPVIEDGFYYDFAFERSFTPDDLSLIEAKMHELAKANLSITRRELPRNEAIQYFKSLGEEYKAKIIADIPENEALSLYRQGDFEDLCRGPHVPSTGFLKAFKLTKVAGAYWRGDSNNEMLQRIYGTAWADKKSLEEYLFRLEEAEKRDHRKLGKALDLFHFQDIAPGMVFWHPKGWTIYQELEHYMRNRLVDFGYQEIRTPQLVDRSLWEKSGHWANFRDEMFVTETENRHYAVKPMSCPCHVQIYNHGLKSYRDLPLRLSEFGNCHRCEPSGALHGLMRVRNMVQDDAHIFCTEDQIQSEVAMMLELVQSVYKDFGFTEIKYRLALRPEKRVGSDDVWDKAETALKLAMQGRNIEWVDAPGEGAFYGPKIECSLSDCLGRIWQCGTIQVDFSMPARLEASYVAEDGSKQTPVMLHRAILGSFERFMGILIEHYAGKLPLWLSPVQAVVLTISEKQNEYAEKVRKTLQKRGIRANFDLRNEKIGFKIREHTLQKIPYLLVVGDKEVENCQVAVRTRDGIDLGVMTIDTICDTLTQEIIRKGSI.

The region spanning 1-61 is the TGS domain; the sequence is MPNVKLPDGN…KEDCSLIIVT (61 aa). A catalytic region spans residues 242 to 533; it reads DHRKLGKALD…LIEHYAGKLP (292 aa). Zn(2+)-binding residues include cysteine 333, histidine 384, and histidine 510.

The protein belongs to the class-II aminoacyl-tRNA synthetase family. As to quaternary structure, homodimer. It depends on Zn(2+) as a cofactor.

The protein resides in the cytoplasm. It carries out the reaction tRNA(Thr) + L-threonine + ATP = L-threonyl-tRNA(Thr) + AMP + diphosphate + H(+). Catalyzes the attachment of threonine to tRNA(Thr) in a two-step reaction: L-threonine is first activated by ATP to form Thr-AMP and then transferred to the acceptor end of tRNA(Thr). Also edits incorrectly charged L-seryl-tRNA(Thr). The sequence is that of Threonine--tRNA ligase from Legionella pneumophila (strain Corby).